The sequence spans 159 residues: Putative polyketide cyclase (159 aa).

This sequence to polyketide cyclases.

In terms of biological role, involved in developmentally regulated synthesis of a compound biosynthetically related to polyketide antibiotics which is essential for spore color in Streptomyces coelicolor. In Streptomyces coelicolor (strain ATCC BAA-471 / A3(2) / M145), this protein is Putative polyketide cyclase.